We begin with the raw amino-acid sequence, 421 residues long: Gamma-glutamyl phosphate reductase (421 aa).

This sequence belongs to the gamma-glutamyl phosphate reductase family.

Its subcellular location is the cytoplasm. It catalyses the reaction L-glutamate 5-semialdehyde + phosphate + NADP(+) = L-glutamyl 5-phosphate + NADPH + H(+). It functions in the pathway amino-acid biosynthesis; L-proline biosynthesis; L-glutamate 5-semialdehyde from L-glutamate: step 2/2. Its function is as follows. Catalyzes the NADPH-dependent reduction of L-glutamate 5-phosphate into L-glutamate 5-semialdehyde and phosphate. The product spontaneously undergoes cyclization to form 1-pyrroline-5-carboxylate. In Acinetobacter baumannii (strain AYE), this protein is Gamma-glutamyl phosphate reductase.